A 776-amino-acid chain; its full sequence is Cullin-1 (776 aa).

At Arg63 the chain carries Omega-N-methylarginine. The Cullin neddylation domain occupies Asp706–Asp766. Lys720 is covalently cross-linked (Glycyl lysine isopeptide (Lys-Gly) (interchain with G-Cter in NEDD8)).

Belongs to the cullin family. As to quaternary structure, component of multiple Cul1-RING E3 ubiquitin-protein ligase complexes commonly known as SCF (SKP1-CUL1-F-box) complexes, consisting of CUL1, SKP1, RBX1 and a variable F-box domain-containing protein as substrate-specific subunit. Component of the SCF(FBXW11) complex containing FBXW11. Component of the SCF(SKP2) complex containing SKP2, in which it interacts directly with SKP1, SKP2 and RBX1. Component of the SCF(FBXW2) complex containing FBXW2. Component of the SCF(FBXO32) complex containing FBXO32. Component of the probable SCF(FBXO7) complex containing FBXO7. Component of the SCF(FBXO10) complex containing FBXO10. Component of the SCF(FBXO11) complex containing FBXO11. Component of the SCF(FBXO25) complex containing FBXO25. Component of the SCF(FBXO33) complex containing FBXO33. Component of the probable SCF(FBXO4) complex containing FBXO4. Component of the SCF(FBXO44) complex, composed of SKP1, CUL1 and FBXO44. Component of the SCF(BTRC) complex, composed of SKP1, CUL1 and BTRC. This complex binds phosphorylated NFKBIA. Part of a SCF complex consisting of CUL1, RBX1, SKP1 and FBXO2. Component of a SCF(SKP2)-like complex containing CUL1, SKP1, TRIM21 and SKP2. Component of the SCF(FBXO17) complex, composed of SKP1, CUL1 and FBXO17. Component of the SCF(FBXO27) complex, composed of SKP1, CUL1 and FBXO27. Component of the SCF(CCNF) complex consisting of CUL1, RBX1, SKP1 and CCNF. Interacts with CCNF. Component of the SCF(FBXL3) complex composed of CUL1, SKP1, RBX1 and FBXL3. Component of the SCF(FBXL21) complex composed of CUL1, SKP1, RBX1 and FBXL21. Component of the SCF(FBXO9) composed of CUL1, SKP1, RBX1 and FBXO9. Component of the SCF(FBXW7) composed of CUL1, SKP1, RBX1 and FBXW7. Component of the SCF(FBXO31) complex composed of CUL1, SKP1, RBX1 and FBXO31. Interacts with CHEK2; mediates CHEK2 ubiquitination and regulates its function. Part of a complex with TIP120A/CAND1 and RBX1. The unneddylated form interacts with TIP120A/CAND1 and the interaction mediates the exchange of the F-box substrate-specific subunit. Can self-associate. Interacts with FBXW8. Interacts with RNF7. Interacts with TRIM21. Interacts with COPS2. Interacts with UBE2M. Identified in a complex with RBX1 and GLMN. Interacts with CEP68 as part of the SCF(FBXW11) complex; the interaction is probably mediated by FBXW11 and the complex also contains CDK5RAP2 and PCNT. Interacts (when neddylated) with ARIH1; leading to activate the E3 ligase activity of ARIH1. Interacts with COPS9 isoform 2. Interacts with UBXN1. Interacts with KAT7, probably as part of an SCF complex; the interaction mediates KAT7 ubiquitination. Interacts with NOTCH2. Part of a complex that contains DCUN1D5, CUL1 and RBX1; this complex is bridged by CUL1. Interacts (unneddylated form) with DCUN1D1, DCUN1D2, DCUN1D3, DCUN1D4 and DCUN1D5; these interactions promote the cullin neddylation. Interacts (via the C-terminal domain) with CUL7; the interaction seems to be mediated by FBXW8; it is likely specific to FBXW8, but not other F-box proteins. Interacts with UBR2, as part of SCF(BTRC) complex; the interaction mediates 'Lys-48'-linked ubiquitination of UBR2 and is regulated by DUSP22 in the T-cell receptor signaling pathway. In terms of assembly, (Microbial infection) Interacts with Epstein-Barr virus BPLF1. (Microbial infection) Interacts with Human adenovirus early E1A protein; this interaction inhibits RBX1-CUL1-dependent elongation reaction of ubiquitin chains by the SCF(FBXW7) complex. As to quaternary structure, (Microbial infection) Interacts with vaccinia virus protein C9L. In terms of assembly, (Microbial infection) Interacts with Epstein-Barr virus (EBV) tegument protein BGLF2; this interaction might facilitate CUL1 recruitment to STAT2, leading to ubiquitination and degradation of the latter. Post-translationally, neddylated; which enhances the ubiquitination activity of SCF. Neddylation prevents binding of the inhibitor CAND1. Neddylation leads to structural rearrangment in the complex that allows interaction between the E2 ubiquitin-conjugating enzyme and the acceptor ubiquitin. Deneddylated via its interaction with the COP9 signalosome (CSN) complex. In terms of processing, (Microbial infection) Deneddylated by Epstein-Barr virus BPLF1 leading to a S-phase-like environment that is required for efficient replication of the viral genome. Expressed in lung fibroblasts.

The protein operates within protein modification; protein ubiquitination. Its function is as follows. Core component of multiple cullin-RING-based SCF (SKP1-CUL1-F-box protein) E3 ubiquitin-protein ligase complexes, which mediate the ubiquitination of proteins involved in cell cycle progression, signal transduction and transcription. SCF complexes and ARIH1 collaborate in tandem to mediate ubiquitination of target proteins. In the SCF complex, serves as a rigid scaffold that organizes the SKP1-F-box protein and RBX1 subunits. May contribute to catalysis through positioning of the substrate and the ubiquitin-conjugating enzyme. The E3 ubiquitin-protein ligase activity of the complex is dependent on the neddylation of the cullin subunit and exchange of the substrate recognition component is mediated by TIP120A/CAND1. The functional specificity of the SCF complex depends on the F-box protein as substrate recognition component. SCF(BTRC) and SCF(FBXW11) direct ubiquitination of CTNNB1 and participate in Wnt signaling. SCF(FBXW11) directs ubiquitination of phosphorylated NFKBIA. SCF(BTRC) directs ubiquitination of NFKBIB, NFKBIE, ATF4, SMAD3, SMAD4, CDC25A, FBXO5 and probably NFKB2. SCF(BTRC) and/or SCF(FBXW11) direct ubiquitination of CEP68. SCF(SKP2) directs ubiquitination of phosphorylated CDKN1B/p27kip and is involved in regulation of G1/S transition. SCF(SKP2) directs ubiquitination of ORC1, CDT1, RBL2, ELF4, CDKN1A, RAG2, FOXO1A, and probably MYC and TAL1. SCF(FBXW7) directs ubiquitination of CCNE1, NOTCH1 released notch intracellular domain (NICD), and probably PSEN1. SCF(FBXW2) directs ubiquitination of GCM1. SCF(FBXO32) directs ubiquitination of MYOD1. SCF(FBXO7) directs ubiquitination of BIRC2 and DLGAP5. SCF(FBXO33) directs ubiquitination of YBX1. SCF(FBXO1) directs ubiquitination of BCL6 and DTL but does not seem to direct ubiquitination of TP53. SCF(BTRC) mediates the ubiquitination of NFKBIA at 'Lys-21' and 'Lys-22'; the degradation frees the associated NFKB1-RELA dimer to translocate into the nucleus and to activate transcription. SCF(CCNF) directs ubiquitination of CCP110. SCF(FBXL3) and SCF(FBXL21) direct ubiquitination of CRY1 and CRY2. SCF(FBXO9) directs ubiquitination of TTI1 and TELO2. SCF(FBXO10) directs ubiquitination of BCL2. Neddylated CUL1-RBX1 ubiquitinates p53/TP53 recruited by Cul7-RING(FBXW8) complex. SCF(BTRC) directs 'Lys-48'-linked ubiquitination of UBR2 in the T-cell receptor signaling pathway. The SCF(FBXO31) protein ligase complex specifically mediates the ubiquitination of proteins amidated at their C-terminus in response to oxidative stress. This Homo sapiens (Human) protein is Cullin-1 (CUL1).